The chain runs to 130 residues: Small ribosomal subunit protein uS8 (130 aa).

It belongs to the universal ribosomal protein uS8 family. In terms of assembly, part of the 30S ribosomal subunit. Contacts proteins S5 and S12.

Its function is as follows. One of the primary rRNA binding proteins, it binds directly to 16S rRNA central domain where it helps coordinate assembly of the platform of the 30S subunit. In Wigglesworthia glossinidia brevipalpis, this protein is Small ribosomal subunit protein uS8.